The sequence spans 139 residues: ATP synthase epsilon chain (139 aa).

The protein belongs to the ATPase epsilon chain family. In terms of assembly, F-type ATPases have 2 components, CF(1) - the catalytic core - and CF(0) - the membrane proton channel. CF(1) has five subunits: alpha(3), beta(3), gamma(1), delta(1), epsilon(1). CF(0) has three main subunits: a, b and c.

It is found in the cell inner membrane. In terms of biological role, produces ATP from ADP in the presence of a proton gradient across the membrane. The chain is ATP synthase epsilon chain from Salmonella typhimurium (strain LT2 / SGSC1412 / ATCC 700720).